A 152-amino-acid chain; its full sequence is Transcriptional regulator MraZ (152 aa).

SpoVT-AbrB domains follow at residues 5–52 (ATMV…PLPE) and 81–124 (ASEC…DEQT).

This sequence belongs to the MraZ family. Forms oligomers.

Its subcellular location is the cytoplasm. It is found in the nucleoid. Functionally, negatively regulates its own expression and that of the subsequent genes in the proximal part of the division and cell wall (dcw) gene cluster. Acts by binding directly to DNA. May also regulate the expression of genes outside the dcw cluster. The polypeptide is Transcriptional regulator MraZ (Yersinia pestis bv. Antiqua (strain Antiqua)).